The following is a 117-amino-acid chain: MKHRVKKHRLSRNSSHRMSLICNLSVSIIEHGRLQTTLAKARALRPFIEKLITKARVPDSLSVRRLLLSRIKNEAAVTKLINEVARRYTDRPGGYCRIVKTGYRVGDAAPMAIIEFV.

Belongs to the bacterial ribosomal protein bL17 family. Part of the 50S ribosomal subunit. Contacts protein L32.

The chain is Large ribosomal subunit protein bL17 from Neorickettsia sennetsu (strain ATCC VR-367 / Miyayama) (Ehrlichia sennetsu).